The primary structure comprises 370 residues: 4-hydroxy-3-methylbut-2-en-1-yl diphosphate synthase (flavodoxin) (370 aa).

Cys268, Cys271, Cys303, and Glu310 together coordinate [4Fe-4S] cluster.

This sequence belongs to the IspG family. [4Fe-4S] cluster serves as cofactor.

It carries out the reaction (2E)-4-hydroxy-3-methylbut-2-enyl diphosphate + oxidized [flavodoxin] + H2O + 2 H(+) = 2-C-methyl-D-erythritol 2,4-cyclic diphosphate + reduced [flavodoxin]. Its pathway is isoprenoid biosynthesis; isopentenyl diphosphate biosynthesis via DXP pathway; isopentenyl diphosphate from 1-deoxy-D-xylulose 5-phosphate: step 5/6. Functionally, converts 2C-methyl-D-erythritol 2,4-cyclodiphosphate (ME-2,4cPP) into 1-hydroxy-2-methyl-2-(E)-butenyl 4-diphosphate. In Bacillus cereus (strain AH187), this protein is 4-hydroxy-3-methylbut-2-en-1-yl diphosphate synthase (flavodoxin).